The following is a 572-amino-acid chain: MFS-type transporter pydD (572 aa).

The segment covering 1 to 15 (MLQEDKSSETMHDPS) has biased composition (basic and acidic residues). Positions 1–46 (MLQEDKSSETMHDPSTRGVETRNVTAVDSPLETATTSESPETERTN) are disordered. Asn-23 is a glycosylation site (N-linked (GlcNAc...) asparagine). The span at 29 to 39 (SPLETATTSES) shows a compositional bias: low complexity. A run of 8 helical transmembrane segments spans residues 56 to 76 (FWALLVSISLAGLLTALEGTI), 88 to 108 (LGGGHLYVWVVNGYLFAMTAM), 123 to 143 (WPMLGATALFVLGSGICGGAT), 156 to 176 (GIGASGTTVLTETIICDVVPL), 185 to 205 (IVMGMIFLGTALGPFFAGLIV), 212 to 232 (WTFYLALPVGGAALVALFSFL), 255 to 275 (ALFVAAISSVLIGLSWAGSVY), and 282 to 302 (VLVPLFVGIAGMGLFMVFEGS). The N-linked (GlcNAc...) asparagine glycan is linked to Asn-317. A run of 6 helical transmembrane segments spans residues 321-341 (VGVMIMTFFHGIITIWQLYFM), 358-378 (VQILATILAILPAAGIGGFLM), 386-406 (PIHYASWAVTLIGLGLFSLLD), 419-439 (IVYSMGAGMLVPTLLPALLAP), 451-471 (TWSFVRSFGMVWGTAIPAAVF), and 529-549 (WLVSLAFAGMGLLAATLAREV).

This sequence belongs to the major facilitator superfamily.

Its subcellular location is the membrane. Functionally, MFS-type transporter; part of the gene cluster that mediates the biosynthesis of pyrrocidines, fungal natural products containing a macrocyclic para-cyclophane connected to a decahydrofluorene ring system that show potent antibiotic activities toward Gram-negative bacteria. The chain is MFS-type transporter pydD from Acremonium sp.